Reading from the N-terminus, the 332-residue chain is Beta-chimaerin (332 aa).

Residues 78-128 form a Phorbol-ester/DAG-type zinc finger; that stretch reads THNFKVHTFRGPHWCEYCANFMWGLIAQGVRCSDCGLNVHKQCSKHVPNDC. The Rho-GAP domain maps to 141–332; that stretch reads CDLTTLVKAH…ILIENEDVLF (192 aa).

It is found in the membrane. Its activity is regulated as follows. In the inactive state, the N terminus protrudes into the active site of the Rho-GAP domain, sterically blocking Rac binding. Phospholipid binding to the Phorbol-ester/DAG-type zinc-finger/C1 domain triggers the cooperative dissociation of these interactions, allowing the N-terminus to move out of the active site and thereby activating the enzyme. Functionally, GTPase-activating protein for p21-rac. This is Beta-chimaerin (Chn2) from Mus musculus (Mouse).